A 350-amino-acid chain; its full sequence is Protein-glutamate methylesterase/protein-glutamine glutaminase (350 aa).

Residues 5 to 122 (RVLSVDDSAL…REGMLAYSEM (118 aa)) form the Response regulatory domain. At D56 the chain carries 4-aspartylphosphate. A CheB-type methylesterase domain is found at 152–338 (LLSSEKLLVI…DLSQVVSQQM (187 aa)). Catalysis depends on residues S164, H190, and D286.

It belongs to the CheB family. Phosphorylated by CheA. Phosphorylation of the N-terminal regulatory domain activates the methylesterase activity.

Its subcellular location is the cytoplasm. The enzyme catalyses [protein]-L-glutamate 5-O-methyl ester + H2O = L-glutamyl-[protein] + methanol + H(+). It carries out the reaction L-glutaminyl-[protein] + H2O = L-glutamyl-[protein] + NH4(+). Its function is as follows. Involved in chemotaxis. Part of a chemotaxis signal transduction system that modulates chemotaxis in response to various stimuli. Catalyzes the demethylation of specific methylglutamate residues introduced into the chemoreceptors (methyl-accepting chemotaxis proteins or MCP) by CheR. Also mediates the irreversible deamidation of specific glutamine residues to glutamic acid. In Enterobacter cloacae, this protein is Protein-glutamate methylesterase/protein-glutamine glutaminase.